The primary structure comprises 226 residues: Ribonuclease 3 (226 aa).

Residues 6–128 enclose the RNase III domain; sequence INRLQRKLGY…LIGGVFLDSD (123 aa). Mg(2+) is bound at residue Glu-41. The active site involves Asp-45. Positions 114 and 117 each coordinate Mg(2+). Glu-117 is a catalytic residue. The region spanning 155–225 is the DRBM domain; that stretch reads DPKTRLQEYL…AEQALKQLEL (71 aa).

This sequence belongs to the ribonuclease III family. Homodimer. The cofactor is Mg(2+).

The protein resides in the cytoplasm. The catalysed reaction is Endonucleolytic cleavage to 5'-phosphomonoester.. In terms of biological role, digests double-stranded RNA. Involved in the processing of primary rRNA transcript to yield the immediate precursors to the large and small rRNAs (23S and 16S). Processes some mRNAs, and tRNAs when they are encoded in the rRNA operon. Processes pre-crRNA and tracrRNA of type II CRISPR loci if present in the organism. The sequence is that of Ribonuclease 3 from Yersinia pseudotuberculosis serotype O:1b (strain IP 31758).